The chain runs to 271 residues: Shikimate dehydrogenase (NADP(+)) (271 aa).

Shikimate is bound by residues 14 to 16 (SQS) and threonine 61. The Proton acceptor role is filled by lysine 65. Shikimate-binding residues include asparagine 86 and aspartate 101. NADP(+) is bound by residues 125-129 (GAGGA), 148-153 (NRTHAR), and methionine 212. Tyrosine 214 is a binding site for shikimate. Glycine 236 is a binding site for NADP(+).

The protein belongs to the shikimate dehydrogenase family. In terms of assembly, homodimer.

The enzyme catalyses shikimate + NADP(+) = 3-dehydroshikimate + NADPH + H(+). It participates in metabolic intermediate biosynthesis; chorismate biosynthesis; chorismate from D-erythrose 4-phosphate and phosphoenolpyruvate: step 4/7. Its function is as follows. Involved in the biosynthesis of the chorismate, which leads to the biosynthesis of aromatic amino acids. Catalyzes the reversible NADPH linked reduction of 3-dehydroshikimate (DHSA) to yield shikimate (SA). This is Shikimate dehydrogenase (NADP(+)) from Edwardsiella ictaluri (strain 93-146).